A 575-amino-acid polypeptide reads, in one-letter code: UvrABC system protein C (575 aa).

The GIY-YIG domain maps to 15-90; sequence AEPGVYQFEA…IKRHQPRYNV (76 aa). Residues 198–233 enclose the UVR domain; it reads GVLAEPLRREMETAAASQAFERAASLRDRLEAVETF.

The protein belongs to the UvrC family. Interacts with UvrB in an incision complex.

The protein localises to the cytoplasm. Functionally, the UvrABC repair system catalyzes the recognition and processing of DNA lesions. UvrC both incises the 5' and 3' sides of the lesion. The N-terminal half is responsible for the 3' incision and the C-terminal half is responsible for the 5' incision. The protein is UvrABC system protein C of Natronomonas pharaonis (strain ATCC 35678 / DSM 2160 / CIP 103997 / JCM 8858 / NBRC 14720 / NCIMB 2260 / Gabara) (Halobacterium pharaonis).